A 1403-amino-acid chain; its full sequence is Envelopment polyprotein (1403 aa).

The signal sequence occupies residues 1-17 (MLLNIVLISNLACLAFA). At 18 to 209 (LPLKEGTRGS…ELMIESFCTN (192 aa)) the chain is on the lumenal side. N-linked (GlcNAc...) asparagine; by host glycosylation is present at N40. The chain crosses the membrane as a helical span at residues 210-230 (LELILLVTFILVGSVMMMILT). Residues 231–314 (KTYIVYVFIP…PKTRKLCKSK (84 aa)) lie on the Cytoplasmic side of the membrane. The helical transmembrane segment at 315–335 (ISNIVLCVITSLIFFSFITPI) threads the bilayer. Residues 336–361 (SSQCIDIEKLPDEYITCKRELANIKS) lie on the Lumenal side of the membrane. The chain crosses the membrane as a helical span at residues 362 to 382 (LTIDDTYSFIYSCTCIIVLIL). Over 383–448 (LKKAAKYILY…FKFESSYNRT (66 aa)) the chain is Cytoplasmic. A helical transmembrane segment spans residues 449–469 (GLIIFMLLLVPTIVMTQETSI). Residues 470 to 1361 (NCKNIQSTQL…GNLSFYWRLT (892 aa)) are Lumenal-facing. A disulfide bond links C471 and C487. N-linked (GlcNAc...) asparagine; by host glycosylation is present at N493. Disulfide bonds link C523–C550, C580–C589, and C591–C598. Residues N686 and N1353 are each glycosylated (N-linked (GlcNAc...) asparagine; by host). Residues 1362-1382 (IYIIISLIMLILFLYILIPLC) form a helical membrane-spanning segment. Residues 1383–1403 (KRLKGLLEYNERIYQMENKFK) lie on the Cytoplasmic side of the membrane.

This sequence belongs to the nairovirus envelope glycoprotein family. Heterodimer with glycoprotein C; in prefusion state. As to quaternary structure, heterodimer with glycoprotein N; in prefusion state. Homotrimeric; in postfusion state. Post-translationally, specific enzymatic cleavage by host MBTPS1/S1P/SKI-1 endopeptidase yield glycoprotein N. Specific enzymatic cleavages by host furin-like protease and MBTPS1/S1P endopeptidase yield GP38. Glycosylated.

It is found in the host endoplasmic reticulum membrane. Its subcellular location is the virion membrane. The protein resides in the host Golgi apparatus membrane. Functionally, glycoprotein C and glycoprotein N interact with each other and are present at the surface of the virion. Glycoprotein N probably locks the Gn-Gc complex in a prefusion state. Glycoprotein N and glycoprotein C are able to attach the virion to host cell receptors. This attachment induces virion internalization predominantly through clathrin-dependent endocytosis. Glycoprotein C and glycoprotein N interact with each other and are present at the surface of the virion. The spikes at the surface of the virion are formed by an N-terminal extension of glycoprotein C. Glycoprotein N and glycoprotein C are able to attach the virion to host cell receptors. This attachment induces virion internalization predominantly through clathrin-dependent endocytosis. Class II fusion protein that promotes fusion of viral membrane with host endosomal membrane after endocytosis of the virion. Exposure to potassium is necessary for the conformational change leading to fusion. The protein is Envelopment polyprotein (GP) of Bos taurus (Bovine).